We begin with the raw amino-acid sequence, 1818 residues long: Protein encore (1818 aa).

Disordered regions lie at residues 47–68 (ANSSGVGSGSGPGPGSGAGVSG), 123–282 (SAAG…NSSN), and 317–413 (AERH…GFIS). A compositionally biased stretch (gly residues) spans 52–66 (VGSGSGPGPGSGAGV). Residues 124 to 137 (AAGSSNLGRQNSFG) show a composition bias toward polar residues. The span at 141–152 (GNMKGKHLTRSH) shows a compositional bias: basic residues. Composition is skewed to low complexity over residues 156–179 (ESTSPPRTPTPRAASEQQQQQLQG), 186–199 (NNNNINSSSKAQSA), 217–233 (QQPQQQQQQQQQQQQSV), and 266–282 (NSNGSGMEFNNNNNSSN). Residues Ser267 and Ser270 each carry the phosphoserine modification. Residues 317 to 328 (AERHDRHERHEM) are compositionally biased toward basic and acidic residues. At Ser336 the chain carries Phosphoserine. Positions 338–348 (NHDEEPYHYEP) are enriched in basic and acidic residues. Composition is skewed to low complexity over residues 372-381 (NLGGSSSGSI) and 391-410 (NCNNMSNNGQSNNSSNNTSG). The 65-residue stretch at 444-508 (RNILLKIEKD…QCVIVAVAKN (65 aa)) folds into the R3H domain. The 67-residue stretch at 510 to 576 (RIPEIRFQSL…ARSRIFSRTG (67 aa)) folds into the SUZ domain. Ser535 bears the Phosphoserine mark. Positions 557-568 (FEEREEDYDRAR) are enriched in basic and acidic residues. Disordered stretches follow at residues 557-806 (FEER…SYEQ), 885-916 (QEQEQEPMAGPSSSGSATSSVGITELPSSQTP), 936-959 (PYSQCEVKTPSQNHAPSAAVEEPK), 1176-1249 (GQAP…YNPS), 1332-1648 (AAAG…LVSH), and 1684-1709 (GAGASGAAGSNGGHQPGGGGGARSHI). Low complexity predominate over residues 592 to 606 (YGGWEQQQQQQKQSQ). Gly residues predominate over residues 644–655 (NYGGPPSSGGPG). A compositionally biased stretch (polar residues) spans 678-695 (QDSTGSTPWRLSPSSSGS). A compositionally biased stretch (low complexity) spans 713-771 (SGNQYQSQNQGNSSSGGYNNYRKSSPHQQQQSQQQQQSQQHHQQQLQQPQQLHQQSSQQ). Residues 772–784 (YATTELSCSSTES) are compositionally biased toward polar residues. The segment covering 893-904 (AGPSSSGSATSS) has biased composition (low complexity). Low complexity predominate over residues 1176 to 1197 (GQAPMQQQAPHTGAGTTTGPPT). A compositionally biased stretch (polar residues) spans 1220 to 1231 (SSNGSVVTSSAY). The span at 1381 to 1392 (ASQSAPSTPAAP) shows a compositional bias: low complexity. Positions 1430–1443 (TPHYYQGQNSNEGY) are enriched in polar residues. Positions 1503–1521 (ASPSSVSLGGASSSGGANS) are enriched in low complexity. Composition is skewed to polar residues over residues 1554–1565 (AANSSPGVSSYE) and 1579–1596 (FRSQKSMNQDYRRSVSQR). Positions 1608–1633 (SHESSNNSPNSIVGSQSNSAANTPNA) are enriched in low complexity. Residues 1684–1705 (GAGASGAAGSNGGHQPGGGGGA) show a composition bias toward gly residues.

As to quaternary structure, interacts with hfp; however, given the nuclear localization of hfp, the relevance of such interaction is unclear. Interacts with CycE, Cul1, and the SCF-proteasome complex. As to expression, expressed in all germline cells of the germarium including the stem cells and dividing cystocytes.

The protein localises to the cytoplasm. In terms of biological role, required for the regulation of germline mitosis, karyosome formation, and establishment of dorsoventral (DS) polarity of the egg and embryo. Involved in proper grk mRNA localization and translation in the oocyte. May control germline mitosis by facilitating the cyclin E (CycE) proteolysis by the SCF-ubiquitin-proteasome complex. In Drosophila melanogaster (Fruit fly), this protein is Protein encore (enc).